The primary structure comprises 524 residues: GMP synthase [glutamine-hydrolyzing] (524 aa).

In terms of domain architecture, Glutamine amidotransferase type-1 spans 8–206 (KILILDFGSQ…VRKLCQCEAR (199 aa)). Residue C85 is the Nucleophile of the active site. Active-site residues include H180 and E182. Positions 207–399 (WTTGNIVEDA…LGLPYEMVYR (193 aa)) constitute a GMPS ATP-PPase domain. 234-240 (SGGVDSS) is a binding site for ATP.

Homodimer.

The catalysed reaction is XMP + L-glutamine + ATP + H2O = GMP + L-glutamate + AMP + diphosphate + 2 H(+). The protein operates within purine metabolism; GMP biosynthesis; GMP from XMP (L-Gln route): step 1/1. In terms of biological role, catalyzes the synthesis of GMP from XMP. This chain is GMP synthase [glutamine-hydrolyzing], found in Methylococcus capsulatus (strain ATCC 33009 / NCIMB 11132 / Bath).